The primary structure comprises 249 residues: 2,3-bisphosphoglycerate-dependent phosphoglycerate mutase (249 aa).

Substrate is bound by residues 9 to 16 (RHGQSQWN), 22 to 23 (TG), Arg61, 88 to 91 (ERHY), Lys99, 115 to 116 (RR), and 184 to 185 (GN). Catalysis depends on His10, which acts as the Tele-phosphohistidine intermediate. The Proton donor/acceptor role is filled by Glu88.

The protein belongs to the phosphoglycerate mutase family. BPG-dependent PGAM subfamily. In terms of assembly, homodimer.

The enzyme catalyses (2R)-2-phosphoglycerate = (2R)-3-phosphoglycerate. Its pathway is carbohydrate degradation; glycolysis; pyruvate from D-glyceraldehyde 3-phosphate: step 3/5. Catalyzes the interconversion of 2-phosphoglycerate and 3-phosphoglycerate. The chain is 2,3-bisphosphoglycerate-dependent phosphoglycerate mutase from Stenotrophomonas maltophilia (strain K279a).